We begin with the raw amino-acid sequence, 348 residues long: Beta-hexosaminidase (348 aa).

Residues Asp62, Arg70, Arg134, and 164–165 (KH) contribute to the substrate site. The active-site Proton donor/acceptor is His177. Asp249 serves as the catalytic Nucleophile.

It belongs to the glycosyl hydrolase 3 family. NagZ subfamily.

The protein resides in the cytoplasm. It carries out the reaction Hydrolysis of terminal non-reducing N-acetyl-D-hexosamine residues in N-acetyl-beta-D-hexosaminides.. The protein operates within cell wall biogenesis; peptidoglycan recycling. Functionally, plays a role in peptidoglycan recycling by cleaving the terminal beta-1,4-linked N-acetylglucosamine (GlcNAc) from peptide-linked peptidoglycan fragments, giving rise to free GlcNAc, anhydro-N-acetylmuramic acid and anhydro-N-acetylmuramic acid-linked peptides. This is Beta-hexosaminidase from Histophilus somni (strain 2336) (Haemophilus somnus).